A 64-amino-acid polypeptide reads, in one-letter code: Large ribosomal subunit protein bL32 (64 aa).

The segment at 1–35 (MAVQKSRVTPSRRGQRRSHDALTAKQLSTDPTSGE) is disordered.

This sequence belongs to the bacterial ribosomal protein bL32 family.

In Xanthomonas campestris pv. campestris (strain 8004), this protein is Large ribosomal subunit protein bL32.